A 461-amino-acid polypeptide reads, in one-letter code: Ribosomal protein uS12 methylthiotransferase RimO (461 aa).

One can recognise an MTTase N-terminal domain in the interval 9 to 124 (PRIGMVSLGC…VMDAVHLNLP (116 aa)). 6 residues coordinate [4Fe-4S] cluster: C18, C54, C83, C159, C163, and C166. The 243-residue stretch at 145 to 387 (LTPRHYAYLK…AVAEAVSSQK (243 aa)) folds into the Radical SAM core domain. The TRAM domain maps to 389-461 (QQRVGATMQV…QGHDLIAVPV (73 aa)).

The protein belongs to the methylthiotransferase family. RimO subfamily. Requires [4Fe-4S] cluster as cofactor.

It localises to the cytoplasm. The enzyme catalyses L-aspartate(89)-[ribosomal protein uS12]-hydrogen + (sulfur carrier)-SH + AH2 + 2 S-adenosyl-L-methionine = 3-methylsulfanyl-L-aspartate(89)-[ribosomal protein uS12]-hydrogen + (sulfur carrier)-H + 5'-deoxyadenosine + L-methionine + A + S-adenosyl-L-homocysteine + 2 H(+). Its function is as follows. Catalyzes the methylthiolation of an aspartic acid residue of ribosomal protein uS12. This is Ribosomal protein uS12 methylthiotransferase RimO from Polaromonas naphthalenivorans (strain CJ2).